We begin with the raw amino-acid sequence, 552 residues long: Polypeptide N-acetylgalactosaminyltransferase 14 (552 aa).

The Cytoplasmic segment spans residues 1–6 (MRRLTR). The helical; Signal-anchor for type II membrane protein transmembrane segment at 7–26 (RLVLPVFGVLWITVLLFFWV) threads the bilayer. The Lumenal portion of the chain corresponds to 27–552 (TKRKLEVPTG…MSQHWDMVSS (526 aa)). 5 disulfides stabilise this stretch: Cys101/Cys328, Cys319/Cys397, Cys430/Cys449, Cys476/Cys493, and Cys517/Cys538. Positions 110-215 (LPPTSIIITF…RDWLQPLLHR (106 aa)) are catalytic subdomain A. Substrate is bound by residues Asp151 and Arg176. A Mn(2+)-binding site is contributed by Asp199. Residue Ser200 participates in substrate binding. Residue His201 participates in Mn(2+) binding. Residues 274–336 (PIRTPIIAGG…PCSRVGHVFR (63 aa)) form a catalytic subdomain B region. Position 305 (Trp305) interacts with substrate. Residue His333 coordinates Mn(2+). Arg336, His339, and Tyr341 together coordinate substrate. The Ricin B-type lectin domain maps to 415–550 (KESSIQKGNI…SLMSQHWDMV (136 aa)).

It belongs to the glycosyltransferase 2 family. GalNAc-T subfamily. The cofactor is Mn(2+). In terms of tissue distribution, detected in renal tubules (at protein level). Highly expressed in fetal and adult kidney. Widely expressed at low level. Weakly expressed in whole brain, cerebellum, thymus, lung, mammary gland, liver, stomach, small intestine, colon, pancreas, spleen, bladder, uterus, placenta, testis, ovary, skeletal muscle, leukocyte, B-cell, bone marrow, fetal brain, fetal thymus, fetal lung, fetal liver, fetal small intestine, fetal spleen, fetal skeletal and fetus. Detected in renal tubules (at protein level).

The protein resides in the golgi apparatus membrane. It catalyses the reaction L-seryl-[protein] + UDP-N-acetyl-alpha-D-galactosamine = a 3-O-[N-acetyl-alpha-D-galactosaminyl]-L-seryl-[protein] + UDP + H(+). The enzyme catalyses L-threonyl-[protein] + UDP-N-acetyl-alpha-D-galactosamine = a 3-O-[N-acetyl-alpha-D-galactosaminyl]-L-threonyl-[protein] + UDP + H(+). It functions in the pathway protein modification; protein glycosylation. Functionally, catalyzes the initial reaction in O-linked oligosaccharide biosynthesis, the transfer of an N-acetyl-D-galactosamine residue to a serine or threonine residue on the protein receptor. Displays activity toward mucin-derived peptide substrates such as Muc2, Muc5AC, Muc7, and Muc13 (-58). May be involved in O-glycosylation in kidney. The chain is Polypeptide N-acetylgalactosaminyltransferase 14 (GALNT14) from Homo sapiens (Human).